Reading from the N-terminus, the 690-residue chain is Methionine--tRNA ligase (690 aa).

Residues 12–22 (PYANGPLHLGH) carry the 'HIGH' region motif. Positions 144, 147, 157, and 160 each coordinate Zn(2+). The short motif at 333 to 337 (QFSKS) is the 'KMSKS' region element. Position 336 (Lys-336) interacts with ATP. The 98-residue stretch at 535–632 (KKINIDLMVG…VNADDGSRMK (98 aa)) folds into the tRNA-binding domain.

This sequence belongs to the class-I aminoacyl-tRNA synthetase family. MetG type 1 subfamily. Homodimer. The cofactor is Zn(2+).

Its subcellular location is the cytoplasm. The catalysed reaction is tRNA(Met) + L-methionine + ATP = L-methionyl-tRNA(Met) + AMP + diphosphate. Is required not only for elongation of protein synthesis but also for the initiation of all mRNA translation through initiator tRNA(fMet) aminoacylation. The protein is Methionine--tRNA ligase of Picrophilus torridus (strain ATCC 700027 / DSM 9790 / JCM 10055 / NBRC 100828 / KAW 2/3).